The following is a 256-amino-acid chain: Ribonuclease HII (256 aa).

An RNase H type-2 domain is found at 73–256; sequence KLIAGIDEAG…RVSFTKNFIV (184 aa). The a divalent metal cation site is built by Asp-79, Glu-80, and Asp-171.

The protein belongs to the RNase HII family. Mn(2+) serves as cofactor. It depends on Mg(2+) as a cofactor.

Its subcellular location is the cytoplasm. The enzyme catalyses Endonucleolytic cleavage to 5'-phosphomonoester.. In terms of biological role, endonuclease that specifically degrades the RNA of RNA-DNA hybrids. The sequence is that of Ribonuclease HII from Acetivibrio thermocellus (strain ATCC 27405 / DSM 1237 / JCM 9322 / NBRC 103400 / NCIMB 10682 / NRRL B-4536 / VPI 7372) (Clostridium thermocellum).